The chain runs to 603 residues: Aspartate--tRNA(Asp/Asn) ligase (603 aa).

L-aspartate is bound at residue Glu-187. Residues 211–214 form an aspartate region; it reads QQFK. L-aspartate-binding residues include Arg-233 and His-461. 233–235 lines the ATP pocket; sequence RDE. Residue Glu-495 coordinates ATP. Arg-502 is a binding site for L-aspartate. An ATP-binding site is contributed by 547 to 550; sequence GLDR.

The protein belongs to the class-II aminoacyl-tRNA synthetase family. Type 1 subfamily. Homodimer.

Its subcellular location is the cytoplasm. The catalysed reaction is tRNA(Asx) + L-aspartate + ATP = L-aspartyl-tRNA(Asx) + AMP + diphosphate. Its function is as follows. Aspartyl-tRNA synthetase with relaxed tRNA specificity since it is able to aspartylate not only its cognate tRNA(Asp) but also tRNA(Asn). Reaction proceeds in two steps: L-aspartate is first activated by ATP to form Asp-AMP and then transferred to the acceptor end of tRNA(Asp/Asn). In Chlorobaculum parvum (strain DSM 263 / NCIMB 8327) (Chlorobium vibrioforme subsp. thiosulfatophilum), this protein is Aspartate--tRNA(Asp/Asn) ligase.